An 876-amino-acid polypeptide reads, in one-letter code: DNA gyrase subunit A (876 aa).

The region spanning 34 to 532 (LPDVRDGLKP…NSVDINIEDL (499 aa)) is the Topo IIA-type catalytic domain. Residue Tyr122 is the O-(5'-phospho-DNA)-tyrosine intermediate of the active site. The GyrA-box motif lies at 559–565 (QRRGGKG). Residues 844-876 (DEELDAIDGSAAEGDEDIAPEADTDDDIAEDEE) are disordered. Residues 856 to 876 (EGDEDIAPEADTDDDIAEDEE) show a composition bias toward acidic residues.

The protein belongs to the type II topoisomerase GyrA/ParC subunit family. In terms of assembly, heterotetramer, composed of two GyrA and two GyrB chains. In the heterotetramer, GyrA contains the active site tyrosine that forms a transient covalent intermediate with DNA, while GyrB binds cofactors and catalyzes ATP hydrolysis.

The protein localises to the cytoplasm. The enzyme catalyses ATP-dependent breakage, passage and rejoining of double-stranded DNA.. A type II topoisomerase that negatively supercoils closed circular double-stranded (ds) DNA in an ATP-dependent manner to modulate DNA topology and maintain chromosomes in an underwound state. Negative supercoiling favors strand separation, and DNA replication, transcription, recombination and repair, all of which involve strand separation. Also able to catalyze the interconversion of other topological isomers of dsDNA rings, including catenanes and knotted rings. Type II topoisomerases break and join 2 DNA strands simultaneously in an ATP-dependent manner. The polypeptide is DNA gyrase subunit A (Klebsiella oxytoca).